The chain runs to 964 residues: MALLCGLGQVTLRLWVSLPFQTENRIGFLAAGAFLRSGGMEALTTQLGPGREGSSSPNSKQELQPYSGSSALKPNQVGETSLYGVPIVSLVIDGQERLCLAQISNTLLKNYSYNEIHNRRVALGITCVQCTPVQLEILRRAGAMPISSRRCGMITKREAERLCKSFLGEHKPPKLPENFAFDVVHECAWGSRGSFIPARYNSSRAKCIKCGYCSMYFSPNKFIFHSHRTPDAKYTQPDAANFNSWRRHLKLSDKSATDELSHAWEDVKAMFNGGTRKRTFSLQGGGGGGANSGSGGAGKGGAGGGGGPGCGSEMAPGPPPHKSLRCGEDEASGPPGPPPPHPQRALGLAAAANGPAGPGGPGGSAGVRSYPVIPVPSKGFGLLQKLPPPLFPHPYGFPTAFGLCPKKDDPVLVAGEPKGGPGTGSGGGAGTAAGAGGPGAGHLPPGAGPGPGGGTMFWGHQPSGAAKDAAAVAAAAAAATVYPTFPMFWPAAGSLPVPPYPAAQSQAKAVAAAVAAAAAAAAAAAGGGGPESLDGAEPAKEGSLGTEERCPSALSRGPLDEDGADEALPPSLAPLAPPPPPPARKSSYVSAFRPVVKDAESIAKLYGSAREAYGSGPARGPVPGTGTGGGYVSPDFLSEGSSSYHSASPDVDTADEPEVDVESNRFPDEEGAQEDTEPSVPSTGGGPDGDQPAGPPSVTSSGADGPTDSADGDSPRPRRRLGPPPAIRSAFGDLVADDVVRRTERSPPNGGYELREPCGPLGGPAAAKVYVPERDEHVKSAAAAAALGPAASYLCTPETHEPDKEDNHSTTADDLETRKSFSDQRSVSQPSPANTDRGEDGLTLDVTGTQLVEKDIENLAREELQKLLLEQMELRKKLEREFQSLKDNFQDQMKRELAYREEMVQQLQIVRDTLCNELDQERKARYAIQQKLKEAHDALHHFSCKMLTPRHCTGNCSFKPPLLP.

6 disordered regions span residues 45 to 72, 278 to 365, 414 to 452, 525 to 587, 610 to 766, and 793 to 842; these read TQLG…SSAL, RTFS…GGSA, AGEP…PGPG, AGGG…RKSS, REAY…GPAA, and YLCT…EDGL. Residues 283–310 show a composition bias toward gly residues; it reads QGGGGGGANSGSGGAGKGGAGGGGGPGC. Low complexity predominate over residues 345–355; sequence ALGLAAAANGP. Gly residues-rich tracts occupy residues 356 to 365 and 417 to 440; these read AGPGGPGGSA and PKGG…GPGA. Positions 571–583 are enriched in pro residues; sequence SLAPLAPPPPPPA. Acidic residues predominate over residues 652–661; it reads DTADEPEVDV. Positions 798-808 are enriched in basic and acidic residues; the sequence is ETHEPDKEDNH. Polar residues predominate over residues 823–834; that stretch reads DQRSVSQPSPAN. The stretch at 857–921 forms a coiled coil; sequence ENLAREELQK…DTLCNELDQE (65 aa).

This sequence belongs to the SKI family. In terms of assembly, interacts with LBX1. Interacts with SMAD1, SMAD2 and SMAD3.

It is found in the nucleus. Inhibits BMP signaling. Acts as a transcriptional corepressor of LBX1. The protein is SKI family transcriptional corepressor 1 (Skor1) of Rattus norvegicus (Rat).